The primary structure comprises 212 residues: Pyridoxine/pyridoxamine 5'-phosphate oxidase (212 aa).

Substrate contacts are provided by residues 8 to 11 (RREY) and Lys-66. FMN contacts are provided by residues 61–66 (RIVLLK), 76–77 (FT), Arg-82, Lys-83, and Gln-105. 3 residues coordinate substrate: Tyr-123, Arg-127, and Ser-131. Residues 140–141 (QS) and Trp-185 each bind FMN. 191-193 (RLH) provides a ligand contact to substrate. Arg-195 contacts FMN.

The protein belongs to the pyridoxamine 5'-phosphate oxidase family. In terms of assembly, homodimer. Requires FMN as cofactor.

It catalyses the reaction pyridoxamine 5'-phosphate + O2 + H2O = pyridoxal 5'-phosphate + H2O2 + NH4(+). The enzyme catalyses pyridoxine 5'-phosphate + O2 = pyridoxal 5'-phosphate + H2O2. The protein operates within cofactor metabolism; pyridoxal 5'-phosphate salvage; pyridoxal 5'-phosphate from pyridoxamine 5'-phosphate: step 1/1. It functions in the pathway cofactor metabolism; pyridoxal 5'-phosphate salvage; pyridoxal 5'-phosphate from pyridoxine 5'-phosphate: step 1/1. Catalyzes the oxidation of either pyridoxine 5'-phosphate (PNP) or pyridoxamine 5'-phosphate (PMP) into pyridoxal 5'-phosphate (PLP). This is Pyridoxine/pyridoxamine 5'-phosphate oxidase from Shewanella sp. (strain ANA-3).